Here is a 433-residue protein sequence, read N- to C-terminus: tRNA modification GTPase MnmE (433 aa).

Residues Arg24, Glu86, and Lys125 each contribute to the (6S)-5-formyl-5,6,7,8-tetrahydrofolate site. One can recognise a TrmE-type G domain in the interval 218–363; that stretch reads GARLALIGAP…LKEALREALL (146 aa). Asn228 provides a ligand contact to K(+). Residues 228–233, 247–253, and 272–275 contribute to the GTP site; these read NAGKSS, SPIPGTT, and DTAG. Ser232 provides a ligand contact to Mg(2+). Ser247, Ile249, and Thr252 together coordinate K(+). Thr253 contributes to the Mg(2+) binding site. Lys433 contributes to the (6S)-5-formyl-5,6,7,8-tetrahydrofolate binding site.

It belongs to the TRAFAC class TrmE-Era-EngA-EngB-Septin-like GTPase superfamily. TrmE GTPase family. Homodimer. Heterotetramer of two MnmE and two MnmG subunits. Requires K(+) as cofactor.

Its subcellular location is the cytoplasm. In terms of biological role, exhibits a very high intrinsic GTPase hydrolysis rate. Involved in the addition of a carboxymethylaminomethyl (cmnm) group at the wobble position (U34) of certain tRNAs, forming tRNA-cmnm(5)s(2)U34. In Thermus thermophilus (strain ATCC BAA-163 / DSM 7039 / HB27), this protein is tRNA modification GTPase MnmE.